The following is an 83-amino-acid chain: uncharacterized protein (83 aa).

This is an uncharacterized protein from Escherichia phage 186 (Bacteriophage 186).